The sequence spans 318 residues: Beta-ketoacyl-[acyl-carrier-protein] synthase III (318 aa).

Residues C112 and H245 contribute to the active site. The segment at Q246–R250 is ACP-binding. The active site involves N275.

Belongs to the thiolase-like superfamily. FabH family. As to quaternary structure, homodimer.

It is found in the cytoplasm. The enzyme catalyses malonyl-[ACP] + acetyl-CoA + H(+) = 3-oxobutanoyl-[ACP] + CO2 + CoA. The protein operates within lipid metabolism; fatty acid biosynthesis. Catalyzes the condensation reaction of fatty acid synthesis by the addition to an acyl acceptor of two carbons from malonyl-ACP. Catalyzes the first condensation reaction which initiates fatty acid synthesis and may therefore play a role in governing the total rate of fatty acid production. Possesses both acetoacetyl-ACP synthase and acetyl transacylase activities. Its substrate specificity determines the biosynthesis of branched-chain and/or straight-chain of fatty acids. This is Beta-ketoacyl-[acyl-carrier-protein] synthase III from Rickettsia conorii (strain ATCC VR-613 / Malish 7).